Consider the following 127-residue polypeptide: Large ribosomal subunit protein bL12 (127 aa).

The tract at residues 93–127 (LVDEAPNPVSEGVSREEADDLKAQIEDAGGEVELQ) is disordered. Over residues 105 to 117 (VSREEADDLKAQI) the composition is skewed to basic and acidic residues.

It belongs to the bacterial ribosomal protein bL12 family. In terms of assembly, homodimer. Part of the ribosomal stalk of the 50S ribosomal subunit. Forms a multimeric L10(L12)X complex, where L10 forms an elongated spine to which 2 to 4 L12 dimers bind in a sequential fashion. Binds GTP-bound translation factors.

Its function is as follows. Forms part of the ribosomal stalk which helps the ribosome interact with GTP-bound translation factors. Is thus essential for accurate translation. This chain is Large ribosomal subunit protein bL12, found in Salinibacter ruber (strain DSM 13855 / M31).